A 1233-amino-acid polypeptide reads, in one-letter code: Mitogen-activated protein kinase kinase kinase kinase 4 (1233 aa).

An N-acetylalanine modification is found at Ala2. Ser5 is subject to Phosphoserine. Residues 25–289 (FELVEVVGNG…EQLLKHPFIR (265 aa)) form the Protein kinase domain. ATP-binding positions include 31-39 (VGNGTYGQV) and Lys53. Asp152 (proton acceptor) is an active-site residue. Disordered stretches follow at residues 305–348 (IDRT…VPGE), 401–463 (QKEQ…VERE), and 489–805 (QAML…ETES). Residues 316–337 (DETEYEYSGSEEEEEEVPEQEG) are compositionally biased toward acidic residues. Phosphoserine occurs at positions 323 and 325. Residues 521 to 537 (PEPKPHYDPADRAREVQ) show a composition bias toward basic and acidic residues. Ser543 bears the Phosphoserine mark. The span at 544–559 (LKNNVSPVSRSHSFSD) shows a compositional bias: polar residues. Ser619, Ser621, Ser629, and Ser646 each carry phosphoserine. The segment covering 654–663 (LLWERVEKLV) has biased composition (basic and acidic residues). The span at 666–692 (PGSGSSSGSSNSGSQPGSHPGSQSGSG) shows a compositional bias: low complexity. Phosphoserine is present on residues Ser691, Ser703, and Ser706. Composition is skewed to basic and acidic residues over residues 713 to 726 (SAAK…EVFR) and 741 to 756 (KELR…HKVT). Acidic residues predominate over residues 766–781 (GTTDEEEEDVEQEGAD). A compositionally biased stretch (polar residues) spans 783-803 (STSGPEDTRAASSPNLSNGET). Ser785, Ser794, Ser795, Ser799, and Ser817 each carry phosphoserine. Residue Thr822 is modified to Phosphothreonine. 4 positions are modified to phosphoserine: Ser846, Ser849, Ser894, and Ser907. Positions 852 to 1206 (PFIDPRLLQI…LKFLCGRNDK (355 aa)) are mediates interaction with RAP2A. The region spanning 920–1207 (NSEILCAALW…KFLCGRNDKV (288 aa)) is the CNH domain.

This sequence belongs to the protein kinase superfamily. STE Ser/Thr protein kinase family. STE20 subfamily. As to quaternary structure, interacts with the SH3 domain of the adapter proteins Nck. Interacts (via its CNH regulatory domain) with ATL1 (via the N-terminal region). Interacts with RAP2A (GTP-bound form preferentially). Mg(2+) serves as cofactor. In terms of tissue distribution, appears to be ubiquitous, expressed in all tissue types examined. Highest levels observed in heart and brain.

The protein resides in the cytoplasm. The enzyme catalyses L-seryl-[protein] + ATP = O-phospho-L-seryl-[protein] + ADP + H(+). It carries out the reaction L-threonyl-[protein] + ATP = O-phospho-L-threonyl-[protein] + ADP + H(+). In terms of biological role, serine/threonine kinase that plays a role in the response to environmental stress and cytokines such as TNF-alpha. Appears to act upstream of the JUN N-terminal pathway. Activator of the Hippo signaling pathway which plays a pivotal role in organ size control and tumor suppression by restricting proliferation and promoting apoptosis. MAP4Ks act in parallel to and are partially redundant with STK3/MST2 and STK4/MST2 in the phosphorylation and activation of LATS1/2, and establish MAP4Ks as components of the expanded Hippo pathway. Phosphorylates SMAD1 on Thr-322. This chain is Mitogen-activated protein kinase kinase kinase kinase 4 (Map4k4), found in Mus musculus (Mouse).